Here is a 202-residue protein sequence, read N- to C-terminus: B-cell CLL/lymphoma 7 protein family member B (202 aa).

Positions 53–202 are disordered; it reads DSKEKEKSKS…PTVPQTASES (150 aa). A compositionally biased stretch (polar residues) spans 90–99; sequence ENSNQSSVSD. Positions 107–123 are enriched in low complexity; it reads SSTNSSPSPQQSESLSP. A phosphoserine mark is found at Ser114, Ser118, Ser120, Ser122, Ser127, Ser148, and Ser152.

Belongs to the BCL7 family. Ubiquitous.

Positive regulator of apoptosis. Plays a role in the Wnt signaling pathway, negatively regulating the expression of Wnt signaling components CTNNB1 and HMGA1. Involved in cell cycle progression, maintenance of the nuclear structure and stem cell differentiation. May play a role in lung tumor development or progression. The sequence is that of B-cell CLL/lymphoma 7 protein family member B (BCL7B) from Homo sapiens (Human).